We begin with the raw amino-acid sequence, 409 residues long: Z-DNA-binding protein 1 (409 aa).

2 Z-binding domains span residues 8–70 and 85–147; these read LGTG…SLGG and SAAQ…TIYR. Residues K17 and K43 each participate in a glycyl lysine isopeptide (Lys-Gly) (interchain with G-Cter in ubiquitin) cross-link. Positions 59–87 are disordered; that stretch reads SSPAPATWSLGGDGASGDGAPEIPEDSAA. 2 consecutive short sequence motifs (RIP homotypic interaction motif (RHIM)) follow at residues 183-207 and 241-265; these read NSLI…RQTI and LIHL…LERD. Disordered regions lie at residues 269 to 307 and 323 to 369; these read HPIF…GGTT and GNNN…TPSD. The segment covering 270-290 has biased composition (low complexity); the sequence is PIFSFSSSPPESTTTADPETA. The span at 337-351 shows a compositional bias: basic and acidic residues; it reads GTKESADSQELKEDT.

Homodimer. Interacts (via RIP homotypic interaction motif) with RIPK3; leading to RIPK3 activation and necroptosis; interaction is enhanced by CASP6. Interacts (via RIP homotypic interaction motif) with RIPK1. Component of the AIM2 PANoptosome complex, a multiprotein complex that drives inflammatory cell death (PANoptosis). In terms of processing, ubiquitinated; polyubiquitinated following influenza A virus (IAV) infection. Phosphorylated.

It localises to the cytoplasm. The protein localises to the nucleus. Its activity is regulated as follows. ZBP1-dependent necroptosis is normally inhibited by RIPK1: RIPK1 inhibits the ZBP1-induced activation of RIPK3 via FADD-mediated recruitment of CASP8, which cleaves RIPK1 and limits TNF-induced necroptosis. Its function is as follows. Key innate sensor that recognizes and binds Z-RNA structures, which are produced by a number of viruses, such as herpesvirus, orthomyxovirus or flavivirus, and triggers different forms of cell death. ZBP1 acts as an essential mediator of pyroptosis, necroptosis and apoptosis (PANoptosis), an integral part of host defense against pathogens, by activating RIPK3, caspase-8 (CASP8), and the NLRP3 inflammasome. Key activator of necroptosis, a programmed cell death process in response to death-inducing TNF-alpha family members, via its ability to bind Z-RNA: once activated upon Z-RNA-binding, ZBP1 interacts and stimulates RIPK3 kinase, which phosphorylates and activates MLKL, triggering execution of programmed necrosis. In addition to TNF-induced necroptosis, necroptosis can also take place in the nucleus in response to orthomyxoviruses infection: ZBP1 recognizes and binds Z-RNA structures that are produced in infected nuclei by orthomyxoviruses, such as the influenza A virus (IAV), leading to ZBP1 activation, RIPK3 stimulation and subsequent MLKL phosphorylation, triggering disruption of the nuclear envelope and leakage of cellular DNA into the cytosol. ZBP1-dependent cell death in response to IAV infection promotes interleukin-1 alpha (IL1A) induction in an NLRP3-inflammasome-independent manner: IL1A expression is required for the optimal interleukin-1 beta (IL1B) production, and together, these cytokines promote infiltration of inflammatory neutrophils to the lung, leading to the formation of neutrophil extracellular traps. In addition to its direct role in driving necroptosis via its ability to sense Z-RNAs, also involved in PANoptosis triggered in response to bacterial infection: component of the AIM2 PANoptosome complex, a multiprotein complex that triggers PANoptosis. Also acts as the apical sensor of fungal infection responsible for activating PANoptosis. Involved in CASP8-mediated cell death via its interaction with RIPK1 but independently of its ability to sense Z-RNAs. In some cell types, also able to restrict viral replication by promoting cell death-independent responses. In response to flavivirus infection in neurons, promotes a cell death-independent pathway that restricts viral replication: together with RIPK3, promotes a death-independent transcriptional program that modifies the cellular metabolism via up-regulation expression of the enzyme ACOD1/IRG1 and production of the metabolite itaconate. Itaconate inhibits the activity of succinate dehydrogenase, generating a metabolic state in neurons that suppresses replication of viral genomes. In Rattus norvegicus (Rat), this protein is Z-DNA-binding protein 1.